The chain runs to 88 residues: Insulin-related peptide 4 (88 aa).

A signal peptide spans 1-19 (MKLTLIILLVVAYSWCSEA). The propeptide occupies 20–45 (QNEARVFCGRVLSERLAALCWGPNSV). Arg-65 bears the Arginine amide mark. The propeptide occupies 69-88 (GLATECCDKACTVEELLSYC).

Belongs to the insulin family. DAGWWLTRGAARSLGGVR-amide: Expressed in corpora cardiaca (CC), corpora allata (CA), antennal lobe (AL) and gnathal ganglion (GNG) (at protein level). Expression in CC and CA detected in most animals, in AL and GNG in few animals (at protein level).

It is found in the secreted. The sequence is that of Insulin-related peptide 4 from Agrotis ipsilon (Black cutworm moth).